Reading from the N-terminus, the 159-residue chain is Probable metallophosphoesterase MPN_126 (159 aa).

Residues Asp9, His11, Asp34, Asn53, His75, His107, and His109 each coordinate Mn(2+).

The protein belongs to the metallophosphoesterase superfamily. YfcE family. Mn(2+) serves as cofactor.

The chain is Probable metallophosphoesterase MPN_126 from Mycoplasma pneumoniae (strain ATCC 29342 / M129 / Subtype 1) (Mycoplasmoides pneumoniae).